The following is a 115-amino-acid chain: Small ribosomal subunit protein bS6 (115 aa).

The protein belongs to the bacterial ribosomal protein bS6 family.

Functionally, binds together with bS18 to 16S ribosomal RNA. This is Small ribosomal subunit protein bS6 from Picosynechococcus sp. (strain ATCC 27264 / PCC 7002 / PR-6) (Agmenellum quadruplicatum).